A 264-amino-acid polypeptide reads, in one-letter code: MVESKLTIADRSFASRLIMGTGGASNLAVLQEALVASGTELTTVAIRRVDAEGGTGLLDLLNRLGITPLPNTAGCRSAAEAVLTAQLAREALATNWVKLEVIADERTLLPDAIELVRAAEQLVDDGFVVLPYTNDDPVLARRLEDTGCAAVMPLGSPIGTGLGITNPHNIEMIVASAGVPVVLDAGIGTASDAALAMELGCDAVLLATAVTRAADPAAMAAAMSAAVTAGYLARRAGRIPKRFWAQASSPTLVTTQSPGAESGN.

The active-site Schiff-base intermediate with DXP is Lys-98. Residues Gly-159, 185–186 (AG), and 207–208 (AT) each bind 1-deoxy-D-xylulose 5-phosphate.

The protein belongs to the ThiG family. In terms of assembly, homotetramer. Forms heterodimers with either ThiH or ThiS.

Its subcellular location is the cytoplasm. The catalysed reaction is [ThiS sulfur-carrier protein]-C-terminal-Gly-aminoethanethioate + 2-iminoacetate + 1-deoxy-D-xylulose 5-phosphate = [ThiS sulfur-carrier protein]-C-terminal Gly-Gly + 2-[(2R,5Z)-2-carboxy-4-methylthiazol-5(2H)-ylidene]ethyl phosphate + 2 H2O + H(+). It participates in cofactor biosynthesis; thiamine diphosphate biosynthesis. Functionally, catalyzes the rearrangement of 1-deoxy-D-xylulose 5-phosphate (DXP) to produce the thiazole phosphate moiety of thiamine. Sulfur is provided by the thiocarboxylate moiety of the carrier protein ThiS. In vitro, sulfur can be provided by H(2)S. This Mycobacterium marinum (strain ATCC BAA-535 / M) protein is Thiazole synthase.